Reading from the N-terminus, the 100-residue chain is Urease subunit gamma (100 aa).

Belongs to the urease gamma subunit family. Heterotrimer of UreA (gamma), UreB (beta) and UreC (alpha) subunits. Three heterotrimers associate to form the active enzyme.

Its subcellular location is the cytoplasm. It carries out the reaction urea + 2 H2O + H(+) = hydrogencarbonate + 2 NH4(+). The protein operates within nitrogen metabolism; urea degradation; CO(2) and NH(3) from urea (urease route): step 1/1. The polypeptide is Urease subunit gamma (Stutzerimonas stutzeri (strain A1501) (Pseudomonas stutzeri)).